Reading from the N-terminus, the 301-residue chain is Mycothiol acetyltransferase (301 aa).

N-acetyltransferase domains are found at residues 7-150 (VDWQ…PPVD) and 152-301 (VRFA…AVEG). Asp-39 serves as a coordination point for 1D-myo-inositol 2-(L-cysteinylamino)-2-deoxy-alpha-D-glucopyranoside. Residues 80–82 (LVV) and 88–93 (RRGIGS) contribute to the acetyl-CoA site. Glu-179, Lys-220, and Glu-228 together coordinate 1D-myo-inositol 2-(L-cysteinylamino)-2-deoxy-alpha-D-glucopyranoside. 232 to 234 (VGV) is an acetyl-CoA binding site. Residue Tyr-271 participates in 1D-myo-inositol 2-(L-cysteinylamino)-2-deoxy-alpha-D-glucopyranoside binding. 276–281 (NTAAVK) serves as a coordination point for acetyl-CoA.

This sequence belongs to the acetyltransferase family. MshD subfamily. Monomer.

It catalyses the reaction 1D-myo-inositol 2-(L-cysteinylamino)-2-deoxy-alpha-D-glucopyranoside + acetyl-CoA = mycothiol + CoA + H(+). In terms of biological role, catalyzes the transfer of acetyl from acetyl-CoA to desacetylmycothiol (Cys-GlcN-Ins) to form mycothiol. This is Mycothiol acetyltransferase from Mycolicibacterium vanbaalenii (strain DSM 7251 / JCM 13017 / BCRC 16820 / KCTC 9966 / NRRL B-24157 / PYR-1) (Mycobacterium vanbaalenii).